We begin with the raw amino-acid sequence, 297 residues long: Nitrogenase iron protein (297 aa).

11-18 (GKGGIGKS) is a binding site for ATP. Cysteine 99 contacts [4Fe-4S] cluster. An ADP-ribosylarginine; by dinitrogenase reductase ADP-ribosyltransferase modification is found at arginine 102. Residue cysteine 133 participates in [4Fe-4S] cluster binding.

Belongs to the NifH/BchL/ChlL family. As to quaternary structure, homodimer. The cofactor is [4Fe-4S] cluster. The reversible ADP-ribosylation of Arg-102 inactivates the nitrogenase reductase and regulates nitrogenase activity.

The enzyme catalyses N2 + 8 reduced [2Fe-2S]-[ferredoxin] + 16 ATP + 16 H2O = H2 + 8 oxidized [2Fe-2S]-[ferredoxin] + 2 NH4(+) + 16 ADP + 16 phosphate + 6 H(+). The key enzymatic reactions in nitrogen fixation are catalyzed by the nitrogenase complex, which has 2 components: the iron protein and the molybdenum-iron protein. This chain is Nitrogenase iron protein (nifH), found in Rhizobium meliloti (strain 1021) (Ensifer meliloti).